The chain runs to 176 residues: ATP-dependent protease subunit HslV (176 aa).

Residue Thr6 is part of the active site. Na(+) is bound by residues Ser161, Cys164, and Thr167.

It belongs to the peptidase T1B family. HslV subfamily. A double ring-shaped homohexamer of HslV is capped on each side by a ring-shaped HslU homohexamer. The assembly of the HslU/HslV complex is dependent on binding of ATP.

It localises to the cytoplasm. It carries out the reaction ATP-dependent cleavage of peptide bonds with broad specificity.. Its activity is regulated as follows. Allosterically activated by HslU binding. Protease subunit of a proteasome-like degradation complex believed to be a general protein degrading machinery. In Aquifex aeolicus (strain VF5), this protein is ATP-dependent protease subunit HslV.